A 337-amino-acid chain; its full sequence is Eukaryotic translation initiation factor 3 subunit H (337 aa).

Residues 21–153 form the MPN domain; sequence VQCDGLAVMK…LKAYRLTPQA (133 aa).

This sequence belongs to the eIF-3 subunit H family. Component of the eukaryotic translation initiation factor 3 (eIF-3) complex. The eIF-3 complex interacts with pix. Interacts with mxt.

The protein resides in the cytoplasm. Component of the eukaryotic translation initiation factor 3 (eIF-3) complex, which is involved in protein synthesis of a specialized repertoire of mRNAs and, together with other initiation factors, stimulates binding of mRNA and methionyl-tRNAi to the 40S ribosome. The eIF-3 complex specifically targets and initiates translation of a subset of mRNAs involved in cell proliferation. The sequence is that of Eukaryotic translation initiation factor 3 subunit H from Drosophila willistoni (Fruit fly).